Consider the following 504-residue polypeptide: Xylose import ATP-binding protein XylG (504 aa).

ABC transporter domains follow at residues 6 to 243 (LEMQ…VGRE) and 262 to 504 (VRNF…TGGK). Residue 38–45 (GENGAGKS) participates in ATP binding.

Belongs to the ABC transporter superfamily. Xylose importer (TC 3.A.1.2.4) family. The complex is composed of two ATP-binding proteins (XylG), two transmembrane proteins (XylH) and a solute-binding protein (XylF).

The protein localises to the cell membrane. The enzyme catalyses D-xylose(out) + ATP + H2O = D-xylose(in) + ADP + phosphate + H(+). In terms of biological role, part of the ABC transporter complex XylFGH involved in xylose import. Responsible for energy coupling to the transport system. This Moorella thermoacetica (strain ATCC 39073 / JCM 9320) protein is Xylose import ATP-binding protein XylG.